We begin with the raw amino-acid sequence, 1610 residues long: E3 ubiquitin-protein ligase listerin (1610 aa).

Positions 1 to 10 (MKKKSTDLYG) are enriched in basic and acidic residues. A disordered region spans residues 1-20 (MKKKSTDLYGRKNPGMQSMS). 12 HEAT repeats span residues 110–148 (LKIFVFMSVLSSALQKKLAPWLKFYITPWVMGFFDSDRA), 314–351 (VPMLRLLSNMISNFPNEVHQFANDSKRPLSKLFSNLIT), 372–408 (IGAMQLVPSIESVDELCDAFLETANQEQRFLSTEVYD), 409–443 (CLLNFLSFVYTDSSDPQIKDHVRDRLRTIFTRYFK), 590–626 (SPAFTLLRDILLLLKDYADLSEPWENVANQFTVSFDE), 627–664 (LENIRVLNSLPSLFADGKLRGKISLVKTLVEYYDTAVF), 736–773 (KSLYSLLPVILFSKPEDDGHVAAHFESIFSLLKEKALE), 965–1003 (GKMPVLFKRFKNLSSAENTTSFSIFAAQGLTDFLIVVSN), 1119–1156 (CCFLRFMYYFLPTVFSLSGSYWNSIFDYIKYAMKMSVV), 1322–1354 (RVYLLVWDLIFYHFEETTYNIKLSIINQLHAMD), 1355–1393 (LLRPLLNTLVEILNLSYDRPINVDKYPKIDYNLMDYSSA), and 1435–1473 (FTGYNVSPLLISASLDDVERSIESEDFQSVGDVNVKVNR). The RING-type; atypical zinc finger occupies 1558–1604 (CAICYSVLSVERTLPNKRCGTCRHKFHASCLYKWFKSSNSSRCPLCR).

It belongs to the LTN1 family. Component of the ribosome quality control complex (RQC), composed of the E3 ubiquitin ligase rkr1/ltn1, rqc1 and mtr1/rqc2, as well as cdc48 and its ubiquitin-binding cofactors. RQC forms a stable complex with 60S ribosomal subunits.

It localises to the nucleus. The protein localises to the cytoplasm. It is found in the cytosol. The catalysed reaction is S-ubiquitinyl-[E2 ubiquitin-conjugating enzyme]-L-cysteine + [acceptor protein]-L-lysine = [E2 ubiquitin-conjugating enzyme]-L-cysteine + N(6)-ubiquitinyl-[acceptor protein]-L-lysine.. It participates in protein modification; protein ubiquitination. In terms of biological role, E3 ubiquitin-protein ligase component of the ribosome quality control complex (RQC), a ribosome-associated complex that mediates ubiquitination and extraction of incompletely synthesized nascent chains for proteasomal degradation. Mediates ubiquitination of proteins derived from mRNAs lacking stop codons (non-stop proteins) and other translation arrest products induced by poly-lysine sequences and tandem rare codons. Ubiquitination leads to cdc48 recruitment for extraction and degradation of the incomplete translation product. May indirectly play a role in chromatin function and transcription. The sequence is that of E3 ubiquitin-protein ligase listerin from Schizosaccharomyces pombe (strain 972 / ATCC 24843) (Fission yeast).